The following is a 309-amino-acid chain: Tagatose-6-phosphate kinase (309 aa).

Belongs to the carbohydrate kinase PfkB family. LacC subfamily.

The catalysed reaction is D-tagatofuranose 6-phosphate + ATP = D-tagatofuranose 1,6-bisphosphate + ADP + H(+). Its pathway is carbohydrate metabolism; D-tagatose 6-phosphate degradation; D-glyceraldehyde 3-phosphate and glycerone phosphate from D-tagatose 6-phosphate: step 1/2. The polypeptide is Tagatose-6-phosphate kinase (Streptococcus pyogenes serotype M5 (strain Manfredo)).